The sequence spans 144 residues: Large ribosomal subunit protein uL15 (144 aa).

The span at 1-16 shows a compositional bias: basic residues; sequence MVVRKEKKSRKYRGYR. Residues 1-35 form a disordered region; it reads MVVRKEKKSRKYRGYRTHGWGTKGQHRDRGAQGGR.

This sequence belongs to the universal ribosomal protein uL15 family. In terms of assembly, part of the 50S ribosomal subunit.

In terms of biological role, binds to the 23S rRNA. The sequence is that of Large ribosomal subunit protein uL15 from Sulfolobus acidocaldarius (strain ATCC 33909 / DSM 639 / JCM 8929 / NBRC 15157 / NCIMB 11770).